Here is a 598-residue protein sequence, read N- to C-terminus: 4-coumarate--CoA ligase-like 6 (598 aa).

Positions 232, 233, 234, 235, 236, and 240 each coordinate ATP. Residue R318 coordinates CoA. Positions 320-389 (DLAAAARAVE…TVFPSVQIVQ (70 aa)) are SBD1. (E)-4-coumaroyl-AMP-binding residues include G367, Q389, and T394. Positions 389, 394, 475, and 490 each coordinate ATP. An SBD2 region spans residues 390-454 (SYGLTESTGP…IRGPVVMKGY (65 aa)). (E)-4-coumaroyl-AMP-binding residues include K492 and K496. The CoA site is built by K498 and G499. Residue K581 coordinates ATP.

Belongs to the ATP-dependent AMP-binding enzyme family. Requires Mg(2+) as cofactor.

It catalyses the reaction (E)-4-coumarate + ATP + CoA = (E)-4-coumaroyl-CoA + AMP + diphosphate. The enzyme catalyses (E)-4-coumarate + ATP + H(+) = (E)-4-coumaroyl-AMP + diphosphate. It carries out the reaction (E)-4-coumaroyl-AMP + CoA = (E)-4-coumaroyl-CoA + AMP + H(+). Carboxylate--CoA ligase that may use 4-coumarate as substrate. Follows a two-step reaction mechanism, wherein the carboxylate substrate first undergoes adenylation by ATP, followed by a thioesterification in the presence of CoA to yield the final CoA thioester. This is 4-coumarate--CoA ligase-like 6 (4CLL6) from Oryza sativa subsp. japonica (Rice).